A 30-amino-acid chain; its full sequence is Dermaseptin-J10 (30 aa).

In terms of tissue distribution, expressed by the skin glands.

The protein localises to the secreted. Its function is as follows. Has antimicrobial activity. This Phasmahyla jandaia (Jandaia leaf frog) protein is Dermaseptin-J10.